A 564-amino-acid chain; its full sequence is Potassium-transporting ATPase potassium-binding subunit (564 aa).

10 helical membrane-spanning segments follow: residues 4–24 (HEILLILAFFALVLVPAPFLG), 67–87 (TLALLAFNLAGLVLLFSILML), 135–155 (VGLTVQNFVSAAVGLCVLVAL), 179–199 (LYVLLPLCLLLALLLVWQGVP), 258–278 (FEVASIILIPAALVFTFGHYV), 286–306 (AILGCMLLLFCLGLGLSLWAE), 376–396 (IFGGVGAGLYGMLLFVLIAVF), 420–440 (LLVFTLLVMPVGVLVLGAIAA), 487–507 (LMIGLAMLIGRFGYILPILAI), and 528–548 (GPLFVSLLTVTILLVGGLTFL).

Belongs to the KdpA family. In terms of assembly, the system is composed of three essential subunits: KdpA, KdpB and KdpC.

It localises to the cell inner membrane. In terms of biological role, part of the high-affinity ATP-driven potassium transport (or Kdp) system, which catalyzes the hydrolysis of ATP coupled with the electrogenic transport of potassium into the cytoplasm. This subunit binds the periplasmic potassium ions and delivers the ions to the membrane domain of KdpB through an intramembrane tunnel. The chain is Potassium-transporting ATPase potassium-binding subunit from Pseudomonas aeruginosa (strain ATCC 15692 / DSM 22644 / CIP 104116 / JCM 14847 / LMG 12228 / 1C / PRS 101 / PAO1).